The sequence spans 718 residues: Centromere/kinetochore protein zw10 (718 aa).

The protein belongs to the ZW10 family.

Its subcellular location is the cytoplasm. It is found in the nucleus. It localises to the chromosome. The protein localises to the centromere. The protein resides in the kinetochore. In terms of biological role, required for accurate chromosome segregation. This Drosophila pseudoobscura pseudoobscura (Fruit fly) protein is Centromere/kinetochore protein zw10 (mit(1)15).